A 180-amino-acid polypeptide reads, in one-letter code: Amnesiac neuropeptides (180 aa).

A signal peptide spans 1–32; that stretch reads MRSFCCCFYPAAVALHCVLLFYTFFLLFRASA. 2 consecutive propeptides follow at residues 33–35 and 152–180; these read LRR and GRRS…GEMR. A disordered region spans residues 155 to 180; it reads SVPRGQPKFSRENPRALSPSLLGEMR.

In terms of tissue distribution, enriched expression in the embryonic and larval nervous systems. Strongly expressed in two large neurons that project over all the lobes of the mushroom bodies.

It is found in the secreted. In terms of biological role, required for associative learning and memory in adults. Expression pattern suggests a modulatory role in memory formation. Controls neurotransmitter-mediated signaling pathways associated with the structure of the larval peripheral nerve. The sequence is that of Amnesiac neuropeptides (amn) from Drosophila melanogaster (Fruit fly).